The chain runs to 629 residues: tRNA uridine 5-carboxymethylaminomethyl modification enzyme MnmG (629 aa).

13-18 (GGGHAG) contacts FAD. Position 273-287 (273-287 (GPRYCPSIEDKIHRF)) interacts with NAD(+).

This sequence belongs to the MnmG family. As to quaternary structure, homodimer. Heterotetramer of two MnmE and two MnmG subunits. Requires FAD as cofactor.

It localises to the cytoplasm. Functionally, NAD-binding protein involved in the addition of a carboxymethylaminomethyl (cmnm) group at the wobble position (U34) of certain tRNAs, forming tRNA-cmnm(5)s(2)U34. The chain is tRNA uridine 5-carboxymethylaminomethyl modification enzyme MnmG from Shewanella baltica (strain OS223).